Here is a 418-residue protein sequence, read N- to C-terminus: 1-deoxy-D-xylulose 5-phosphate reductoisomerase (418 aa).

The NADPH site is built by Thr-32, Gly-33, Ser-34, Ile-35, and Asn-150. Position 151 (Lys-151) interacts with 1-deoxy-D-xylulose 5-phosphate. NADPH is bound at residue Glu-152. Asp-174 serves as a coordination point for Mn(2+). 1-deoxy-D-xylulose 5-phosphate-binding residues include Ser-175, Glu-176, Ser-200, and His-223. A Mn(2+)-binding site is contributed by Glu-176. Residue Gly-229 participates in NADPH binding. Positions 236, 241, 242, and 245 each coordinate 1-deoxy-D-xylulose 5-phosphate. Glu-245 lines the Mn(2+) pocket.

The protein belongs to the DXR family. Requires Mg(2+) as cofactor. It depends on Mn(2+) as a cofactor.

It carries out the reaction 2-C-methyl-D-erythritol 4-phosphate + NADP(+) = 1-deoxy-D-xylulose 5-phosphate + NADPH + H(+). The protein operates within isoprenoid biosynthesis; isopentenyl diphosphate biosynthesis via DXP pathway; isopentenyl diphosphate from 1-deoxy-D-xylulose 5-phosphate: step 1/6. Its function is as follows. Catalyzes the NADPH-dependent rearrangement and reduction of 1-deoxy-D-xylulose-5-phosphate (DXP) to 2-C-methyl-D-erythritol 4-phosphate (MEP). In Streptomyces coelicolor (strain ATCC BAA-471 / A3(2) / M145), this protein is 1-deoxy-D-xylulose 5-phosphate reductoisomerase.